The primary structure comprises 540 residues: Glucose-6-phosphate isomerase (540 aa).

The active-site Proton donor is E350. Active-site residues include H381 and K503.

Belongs to the GPI family.

It localises to the cytoplasm. The enzyme catalyses alpha-D-glucose 6-phosphate = beta-D-fructose 6-phosphate. Its pathway is carbohydrate biosynthesis; gluconeogenesis. It functions in the pathway carbohydrate degradation; glycolysis; D-glyceraldehyde 3-phosphate and glycerone phosphate from D-glucose: step 2/4. Functionally, catalyzes the reversible isomerization of glucose-6-phosphate to fructose-6-phosphate. This is Glucose-6-phosphate isomerase from Paraburkholderia phymatum (strain DSM 17167 / CIP 108236 / LMG 21445 / STM815) (Burkholderia phymatum).